The primary structure comprises 472 residues: Cell division protein FtsP (472 aa).

The tat-type signal signal peptide spans 1-27 (MSLSRRQFIQASGIALCAGAMPLTARA).

Belongs to the FtsP family. Predicted to be exported by the Tat system. The position of the signal peptide cleavage has not been experimentally proven.

Its subcellular location is the periplasm. Cell division protein that is required for growth during stress conditions. May be involved in protecting or stabilizing the divisomal assembly under conditions of stress. This Dickeya dadantii (strain 3937) (Erwinia chrysanthemi (strain 3937)) protein is Cell division protein FtsP.